A 230-amino-acid polypeptide reads, in one-letter code: Ribose-5-phosphate isomerase A (230 aa).

Substrate is bound by residues Thr28–Thr31, Asp83–Asp86, and Lys97–Gly100. Residue Glu106 is the Proton acceptor of the active site. Lys124 contributes to the substrate binding site.

This sequence belongs to the ribose 5-phosphate isomerase family. Homodimer.

The catalysed reaction is aldehydo-D-ribose 5-phosphate = D-ribulose 5-phosphate. It participates in carbohydrate degradation; pentose phosphate pathway; D-ribose 5-phosphate from D-ribulose 5-phosphate (non-oxidative stage): step 1/1. Its function is as follows. Catalyzes the reversible conversion of ribose-5-phosphate to ribulose 5-phosphate. The sequence is that of Ribose-5-phosphate isomerase A from Gloeobacter violaceus (strain ATCC 29082 / PCC 7421).